An 82-amino-acid chain; its full sequence is Cytochrome b559 subunit alpha (82 aa).

A helical transmembrane segment spans residues 22–36 (VIHAITLPSIFLAGF). A heme-binding site is contributed by histidine 24.

The protein belongs to the PsbE/PsbF family. As to quaternary structure, heterodimer of an alpha subunit and a beta subunit. PSII is composed of 1 copy each of membrane proteins PsbA, PsbB, PsbC, PsbD, PsbE, PsbF, PsbH, PsbI, PsbJ, PsbK, PsbL, PsbM, PsbT, PsbX, PsbY, PsbZ, Psb30/Ycf12, peripheral proteins PsbO, CyanoQ (PsbQ), PsbU, PsbV and a large number of cofactors. It forms dimeric complexes. The cofactor is heme b.

It localises to the cellular thylakoid membrane. Its function is as follows. This b-type cytochrome is tightly associated with the reaction center of photosystem II (PSII). PSII is a light-driven water:plastoquinone oxidoreductase that uses light energy to abstract electrons from H(2)O, generating O(2) and a proton gradient subsequently used for ATP formation. It consists of a core antenna complex that captures photons, and an electron transfer chain that converts photonic excitation into a charge separation. The protein is Cytochrome b559 subunit alpha of Synechococcus sp. (strain CC9311).